The primary structure comprises 387 residues: Growth-regulating factor 3 (387 aa).

The region spanning 53 to 88 (PFTAAQYEELEQQALIYKYLVAGVPVPADLLLPIRR) is the QLQ domain. 2 consecutive short sequence motifs (bipartite nuclear localization signal) follow at residues 111–129 (KKLD…KKWR) and 147–154 (RGRNRSRK). The WRC domain occupies 114 to 158 (DPEPGRCRRTDGKKWRCSKEAAPDSKYCERHMHRGRNRSRKPVEA). Positions 145–176 (MHRGRNRSRKPVEAQLVAPHSQPPATAPAAAV) are disordered.

Belongs to the GRF family.

Its subcellular location is the nucleus. In terms of biological role, transcription activator that plays a regulatory role in gibberellin-induced stem elongation. This Oryza sativa subsp. japonica (Rice) protein is Growth-regulating factor 3 (GRF3).